We begin with the raw amino-acid sequence, 800 residues long: DNA topoisomerase 4 subunit A (800 aa).

In terms of domain architecture, Topo IIA-type catalytic spans 31-495; it reads LPDVRDGLKP…EIEEIKIDKE (465 aa). The O-(5'-phospho-DNA)-tyrosine intermediate role is filled by Y119.

This sequence belongs to the type II topoisomerase GyrA/ParC subunit family. ParC type 2 subfamily. As to quaternary structure, heterotetramer composed of ParC and ParE.

It is found in the cell membrane. It carries out the reaction ATP-dependent breakage, passage and rejoining of double-stranded DNA.. In terms of biological role, topoisomerase IV is essential for chromosome segregation. It relaxes supercoiled DNA. Performs the decatenation events required during the replication of a circular DNA molecule. This Staphylococcus aureus (strain Mu50 / ATCC 700699) protein is DNA topoisomerase 4 subunit A.